A 68-amino-acid polypeptide reads, in one-letter code: Potassium channel toxin epsilon-KTx 1.2 (68 aa).

Residues 1–26 (MKFSCGFLLIFLVLSAMIATFSEVEA) form the signal peptide. Disulfide bonds link Cys30-Cys38, Cys33-Cys54, Cys37-Cys47, and Cys42-Cys52. Tyr55 bears the Tyrosine amide mark. Residues 57-68 (RSDLNEEFENYQ) constitute a propeptide that is removed on maturation.

The protein belongs to the short scorpion toxin superfamily. Potassium channel inhibitor family. Epsilon-KTx 01 subfamily. In terms of tissue distribution, expressed by the venom gland.

Its subcellular location is the secreted. Its function is as follows. Potassium channel blocker. At 3 uM, this toxin blocks voltage-gated potassium channels rKv1.2/KCNA2 (5%), hKv1.3/KCNA3 (10%),rKv1.4/KCNA4 (20%), Kv11/hERG (24%), and Shaker-IR (27%). This is Potassium channel toxin epsilon-KTx 1.2 from Tityus serrulatus (Brazilian scorpion).